The following is a 369-amino-acid chain: F-box protein At3g08750 (369 aa).

The F-box domain maps to 6–53 (CLLLPSLPFELIEEILYKIPAESLIRFKSTCKKWYNLITEKRFMYNHL).

The sequence is that of F-box protein At3g08750 from Arabidopsis thaliana (Mouse-ear cress).